We begin with the raw amino-acid sequence, 311 residues long: Probable dihydroorotate dehydrogenase A (fumarate) (311 aa).

Substrate-binding positions include lysine 45, 69 to 73 (NSMGL), and asparagine 128. 45-46 (KT) is a binding site for FMN. Position 128 (asparagine 128) interacts with FMN. The active-site Nucleophile is cysteine 131. FMN-binding residues include lysine 165 and valine 193. Substrate is bound at residue 194–195 (NS). Residues glycine 220, 248–249 (GG), and 270–271 (GT) each bind FMN.

This sequence belongs to the dihydroorotate dehydrogenase family. Type 1 subfamily. As to quaternary structure, homodimer. Requires FMN as cofactor.

The protein resides in the cytoplasm. It carries out the reaction (S)-dihydroorotate + fumarate = orotate + succinate. The protein operates within pyrimidine metabolism; UMP biosynthesis via de novo pathway. Catalyzes the conversion of dihydroorotate to orotate with fumarate as the electron acceptor. In Streptococcus pneumoniae serotype 4 (strain ATCC BAA-334 / TIGR4), this protein is Probable dihydroorotate dehydrogenase A (fumarate) (pyrDA).